A 376-amino-acid polypeptide reads, in one-letter code: Natterin-2 (376 aa).

An N-terminal signal peptide occupies residues 1 to 18 (MNLSVLLVTLLLLSWTSA). A propeptide spanning residues 19–27 (EKDLKVRVA) is cleaved from the precursor.

The protein belongs to the natterin family. Contains 4 disulfide bonds. Expressed by the venom gland.

Its subcellular location is the secreted. With respect to regulation, inhibited by tissue-kallikrein inhibitor TKI and trasylol. Plasma kallikrein inhibitor PKSI527 and classical inhibitors of serine-, metallo-, thiol- or aspartate-peptidases evokes a minor inhibition of the peptide digestion. In terms of biological role, shows nociceptive, edema-inducing and kininogenase activity with release of kallidin from low molecular weight kininogen. The cleavage occurs at Met-Lys bonds. This chain is Natterin-2, found in Thalassophryne nattereri (Copper Joe toadfish).